The sequence spans 1028 residues: Kinesin-like protein KIF28 (1028 aa).

The region spanning 11 to 358 (SVRVAVRVRP…LRYAERAKKV (348 aa)) is the Kinesin motor domain. 114 to 121 (GQTGSGKS) provides a ligand contact to ATP. The FHA domain maps to 460-523 (CDVGRAASNA…LQHLDRIILG (64 aa)). Positions 873 to 902 (NQVPELYQKLLKLEQETELLRDVNRALRGE) form a coiled coil.

The protein belongs to the TRAFAC class myosin-kinesin ATPase superfamily. Kinesin family.

Its subcellular location is the mitochondrion membrane. Its function is as follows. Microtubule-dependent motor protein required for mitochondrion morphology and transport of mitochondria in neuronal cells. This Mus musculus (Mouse) protein is Kinesin-like protein KIF28.